Consider the following 237-residue polypeptide: Large ribosomal subunit protein uL1 (237 aa).

The protein belongs to the universal ribosomal protein uL1 family. In terms of assembly, part of the 50S ribosomal subunit.

Binds directly to 23S rRNA. The L1 stalk is quite mobile in the ribosome, and is involved in E site tRNA release. Functionally, protein L1 is also a translational repressor protein, it controls the translation of the L11 operon by binding to its mRNA. This Rickettsia typhi (strain ATCC VR-144 / Wilmington) protein is Large ribosomal subunit protein uL1.